We begin with the raw amino-acid sequence, 379 residues long: UDP-N-acetylglucosamine--N-acetylmuramyl-(pentapeptide) pyrophosphoryl-undecaprenol N-acetylglucosamine transferase (379 aa).

UDP-N-acetyl-alpha-D-glucosamine contacts are provided by residues 17–19, asparagine 128, arginine 169, serine 197, and glutamine 298; that span reads TGG.

Belongs to the glycosyltransferase 28 family. MurG subfamily.

The protein resides in the cell inner membrane. The catalysed reaction is di-trans,octa-cis-undecaprenyl diphospho-N-acetyl-alpha-D-muramoyl-L-alanyl-D-glutamyl-meso-2,6-diaminopimeloyl-D-alanyl-D-alanine + UDP-N-acetyl-alpha-D-glucosamine = di-trans,octa-cis-undecaprenyl diphospho-[N-acetyl-alpha-D-glucosaminyl-(1-&gt;4)]-N-acetyl-alpha-D-muramoyl-L-alanyl-D-glutamyl-meso-2,6-diaminopimeloyl-D-alanyl-D-alanine + UDP + H(+). Its pathway is cell wall biogenesis; peptidoglycan biosynthesis. Functionally, cell wall formation. Catalyzes the transfer of a GlcNAc subunit on undecaprenyl-pyrophosphoryl-MurNAc-pentapeptide (lipid intermediate I) to form undecaprenyl-pyrophosphoryl-MurNAc-(pentapeptide)GlcNAc (lipid intermediate II). The polypeptide is UDP-N-acetylglucosamine--N-acetylmuramyl-(pentapeptide) pyrophosphoryl-undecaprenol N-acetylglucosamine transferase (Brucella suis biovar 1 (strain 1330)).